The chain runs to 84 residues: Putative movement protein (84 aa).

A helical membrane pass occupies residues A15–A35.

Interacts with the capsid protein (CP). Part of a MP-CP-viral DNA complex.

It localises to the host membrane. Its function is as follows. Involved in the viral transport within, and between cells. This is Putative movement protein from Miscanthus streak virus (isolate 91) (MiSV).